The primary structure comprises 225 residues: Uracil-DNA glycosylase (225 aa).

The active-site Proton acceptor is the D65.

The protein belongs to the uracil-DNA glycosylase (UDG) superfamily. UNG family.

The protein resides in the cytoplasm. It carries out the reaction Hydrolyzes single-stranded DNA or mismatched double-stranded DNA and polynucleotides, releasing free uracil.. Excises uracil residues from the DNA which can arise as a result of misincorporation of dUMP residues by DNA polymerase or due to deamination of cytosine. This is Uracil-DNA glycosylase from Bacillus cereus (strain ATCC 10987 / NRS 248).